The primary structure comprises 372 residues: Serine proteinase inhibitor 1 (372 aa).

Belongs to the serpin family. Poxviruses subfamily.

The protein localises to the host cytoplasm. Plays a role in mediating viral host range. May act to inhibit a caspase independent form of apoptosis to allow efficient virus replication in infected cells. The sequence is that of Serine proteinase inhibitor 1 (OPG208) from Homo sapiens (Human).